The chain runs to 122 residues: Large ribosomal subunit protein uL14 (122 aa).

The protein belongs to the universal ribosomal protein uL14 family. In terms of assembly, part of the 50S ribosomal subunit. Forms a cluster with proteins L3 and L19. In the 70S ribosome, L14 and L19 interact and together make contacts with the 16S rRNA in bridges B5 and B8.

In terms of biological role, binds to 23S rRNA. Forms part of two intersubunit bridges in the 70S ribosome. The sequence is that of Large ribosomal subunit protein uL14 from Lactobacillus gasseri (strain ATCC 33323 / DSM 20243 / BCRC 14619 / CIP 102991 / JCM 1131 / KCTC 3163 / NCIMB 11718 / NCTC 13722 / AM63).